The following is a 118-amino-acid chain: Ribonuclease P protein component (118 aa).

The protein belongs to the RnpA family. As to quaternary structure, consists of a catalytic RNA component (M1 or rnpB) and a protein subunit.

It carries out the reaction Endonucleolytic cleavage of RNA, removing 5'-extranucleotides from tRNA precursor.. Its function is as follows. RNaseP catalyzes the removal of the 5'-leader sequence from pre-tRNA to produce the mature 5'-terminus. It can also cleave other RNA substrates such as 4.5S RNA. The protein component plays an auxiliary but essential role in vivo by binding to the 5'-leader sequence and broadening the substrate specificity of the ribozyme. This Rickettsia felis (strain ATCC VR-1525 / URRWXCal2) (Rickettsia azadi) protein is Ribonuclease P protein component.